A 272-amino-acid polypeptide reads, in one-letter code: Cytochrome c oxidase subunit 3 (272 aa).

7 helical membrane-spanning segments follow: residues 23–43 (PWPF…VMYM), 45–65 (AYVN…LVMF), 91–111 (FGVI…FWAF), 137–157 (WEIP…VTWC), 169–189 (SVLS…FQAY), 210–230 (ATGF…VCLI), and 249–269 (AWYW…IYWW).

Belongs to the cytochrome c oxidase subunit 3 family. Component of the cytochrome c oxidase (complex IV, CIV), a multisubunit enzyme composed of a catalytic core of 3 subunits and several supernumerary subunits. The complex exists as a monomer or a dimer and forms supercomplexes (SCs) in the inner mitochondrial membrane with ubiquinol-cytochrome c oxidoreductase (cytochrome b-c1 complex, complex III, CIII).

It localises to the mitochondrion inner membrane. It catalyses the reaction 4 Fe(II)-[cytochrome c] + O2 + 8 H(+)(in) = 4 Fe(III)-[cytochrome c] + 2 H2O + 4 H(+)(out). Its function is as follows. Component of the cytochrome c oxidase, the last enzyme in the mitochondrial electron transport chain which drives oxidative phosphorylation. The respiratory chain contains 3 multisubunit complexes succinate dehydrogenase (complex II, CII), ubiquinol-cytochrome c oxidoreductase (cytochrome b-c1 complex, complex III, CIII) and cytochrome c oxidase (complex IV, CIV), that cooperate to transfer electrons derived from NADH and succinate to molecular oxygen, creating an electrochemical gradient over the inner membrane that drives transmembrane transport and the ATP synthase. Cytochrome c oxidase is the component of the respiratory chain that catalyzes the reduction of oxygen to water. Electrons originating from reduced cytochrome c in the intermembrane space (IMS) are transferred via the dinuclear copper A center (CU(A)) of subunit 2 and heme A of subunit 1 to the active site in subunit 1, a binuclear center (BNC) formed by heme A3 and copper B (CU(B)). The BNC reduces molecular oxygen to 2 water molecules using 4 electrons from cytochrome c in the IMS and 4 protons from the mitochondrial matrix. The sequence is that of Cytochrome c oxidase subunit 3 (COX3) from Chondrus crispus (Carrageen Irish moss).